Consider the following 229-residue polypeptide: Putative N-acetylmannosamine-6-phosphate 2-epimerase (229 aa).

This sequence belongs to the NanE family.

The catalysed reaction is an N-acyl-D-glucosamine 6-phosphate = an N-acyl-D-mannosamine 6-phosphate. The protein operates within amino-sugar metabolism; N-acetylneuraminate degradation; D-fructose 6-phosphate from N-acetylneuraminate: step 3/5. Its function is as follows. Converts N-acetylmannosamine-6-phosphate (ManNAc-6-P) to N-acetylglucosamine-6-phosphate (GlcNAc-6-P). The chain is Putative N-acetylmannosamine-6-phosphate 2-epimerase from Escherichia coli O7:K1 (strain IAI39 / ExPEC).